The chain runs to 346 residues: Putative [LysW]-L-2-aminoadipate/[LysW]-L-glutamate phosphate reductase (346 aa).

Residue 12–15 coordinates NADP(+); it reads SGFT. The active site involves C147. Position 310 (N310) interacts with NADP(+).

The protein belongs to the NAGSA dehydrogenase family. Type 1 subfamily. LysY sub-subfamily.

The protein resides in the cytoplasm. It catalyses the reaction [amino-group carrier protein]-C-terminal-N-(1-carboxy-5-oxopentan-1-yl)-L-glutamine + phosphate + NADP(+) = [amino-group carrier protein]-C-terminal-N-(1-carboxy-5-phosphooxy-5-oxopentan-1-yl)-L-glutamine + NADPH + H(+). The enzyme catalyses [amino-group carrier protein]-C-terminal-gamma-(L-glutamyl-5-semialdehyde)-L-glutamate + phosphate + NADP(+) = [amino-group carrier protein]-C-terminal-gamma-(5-phospho-L-glutamyl)-L-glutamate + NADPH + H(+). The protein operates within amino-acid biosynthesis; L-lysine biosynthesis via AAA pathway; L-lysine from L-alpha-aminoadipate (Thermus route): step 3/5. It functions in the pathway amino-acid biosynthesis; L-arginine biosynthesis. In terms of biological role, involved in both the arginine and lysine biosynthetic pathways. This Natronomonas pharaonis (strain ATCC 35678 / DSM 2160 / CIP 103997 / JCM 8858 / NBRC 14720 / NCIMB 2260 / Gabara) (Halobacterium pharaonis) protein is Putative [LysW]-L-2-aminoadipate/[LysW]-L-glutamate phosphate reductase.